The primary structure comprises 181 residues: Probable N-acetyltransferase YjcK (181 aa).

An N-acetyltransferase domain is found at 7–172 (IYVRPLEVTD…NGVWEDHQVL (166 aa)).

The protein belongs to the acetyltransferase family. RimJ subfamily.

It carries out the reaction an N-terminal L-alpha-aminoacyl-[protein] + acetyl-CoA = N-terminal N(alpha)-acetyl-L-alpha-aminoacyl-[protein] + CoA + H(+). Probable N-terminal protein acetyltransferase. The polypeptide is Probable N-acetyltransferase YjcK (yjcK) (Bacillus subtilis (strain 168)).